The following is an 853-amino-acid chain: MKAEQKHTPMMQQYLKLKAENPEILLFYRMGDFYELFYDDAKRASQLLDISLTKRGASAGEPIPMAGVPFHAVEGYLAKLVQLGESVAICEQIGDPATSKGPVERKVVRIVTPGTVTDEALLSERIDNLIAAIYQHNGKFGYATLDVTSGRFQLVEPETEEAMAAELQRTAPRELLFPEDFEAVHLMSNRNGNRRRPVWEFELDTAKQQLNQQFGTRDLVGFGVEHASLGLCAAGCLIQYVKDTQRTALPHIRSLTFDRQDHSVILDAATRRNLELTQNLSGGTDNTLAEVLDHCATPMGSRMLKRWLHQPMRCVDTLNNRLDAIGEIKDQSLFTDIQPIFKQIGDIERILARLALRSARPRDMARLRHAMQQLPELEAVTSSLAHPYLKKLAQFAAPMDEVCDLLERAIKENPPVVIREGGVIAEGYNAELDEWRKLADGATEYLEKLEADERERHGIDTLKVGYNAVHGFFIQVSRGQSHLVPPHYVRRQTLKNAERYIIPELKEHEDKVLNSKSKALAVEKKLWEELFDLLMPNLEKIQNLASAISQLDVLQNLAERADSLDYCRPTLNKEAGISIQAGRHPVVEQVTSEPFIANPIELSSNRKMLIITGPNMGGKSTYMRQTALIALMAHIGSYVPAESAHIGSLDRIFTRIGASDDLASGRSTFMVEMTETANILHNATKNSLVLMDEIGRGTSTYDGLSLAWASAEWLATQIGAMTLFATHYFELTELPNLLPNLANVHLDAVEHGDSIAFMHAVQEGAASKSYGLAVAGLAGVPKPVIKNARNKLSQLEQLGQGNDSARPSTVDVANQLSLIPEPSDVEQALSNIDPDDLTPRQALEELYRLKKML.

613 to 620 (GPNMGGKS) serves as a coordination point for ATP.

The protein belongs to the DNA mismatch repair MutS family.

This protein is involved in the repair of mismatches in DNA. It is possible that it carries out the mismatch recognition step. This protein has a weak ATPase activity. The chain is DNA mismatch repair protein MutS from Vibrio campbellii (strain ATCC BAA-1116).